A 338-amino-acid chain; its full sequence is MGAKIKIGINGFGRIGRLVARVALKRDDVELVAVNDPFITTDYMTYMFKYDSVHGQWKNDELTVKDSNTLLFGQKPVTVFAHRNPEEIPWASTGADIIVESTGVFTDKDKAAAHLKGGAKKVIISAPSKDAPMFVVGVNENEYKPEFDIISNASCTTNCLAPLAKVINDRFGIVEGLMTTVHSITATQKTVDGPSSKDWRGGRAASFNIIPSSTGAAKAVGKVLPALNGKLTGMSFRVPTVDVSVVDLTVRLEKAATYDEIKAAIKEESEGKLKGILGYTEDDVVSTDFIGDTRSSIFDAKAGIALNDKFVKLVSWYDNELGYSTRVVDLIVHIAKQL.

Residues 14 to 15 (RI), Asp-36, and Arg-83 contribute to the NAD(+) site. Residues 154 to 156 (SCT), Thr-185, 214 to 215 (TG), and Arg-237 each bind D-glyceraldehyde 3-phosphate. The active-site Nucleophile is Cys-155. Asn-319 serves as a coordination point for NAD(+).

This sequence belongs to the glyceraldehyde-3-phosphate dehydrogenase family. As to quaternary structure, homotetramer.

It localises to the cytoplasm. It catalyses the reaction D-glyceraldehyde 3-phosphate + phosphate + NAD(+) = (2R)-3-phospho-glyceroyl phosphate + NADH + H(+). Its pathway is carbohydrate degradation; glycolysis; pyruvate from D-glyceraldehyde 3-phosphate: step 1/5. Key enzyme in glycolysis that catalyzes the first step of the pathway by converting D-glyceraldehyde 3-phosphate (G3P) into 3-phospho-D-glyceroyl phosphate. Essential for the maintenance of cellular ATP levels and carbohydrate metabolism. The protein is Glyceraldehyde-3-phosphate dehydrogenase, cytosolic (GAPC1) of Pisum sativum (Garden pea).